Reading from the N-terminus, the 360-residue chain is Protein Wnt-5b (360 aa).

A signal peptide spans 1-16; that stretch reads MTPILRLLLLSSLLSC. The cysteines at positions 84 and 95 are disulfide-linked. N-linked (GlcNAc...) asparagine glycans are attached at residues Asn94 and Asn100. Cystine bridges form between Cys134–Cys142, Cys144–Cys162, Cys218–Cys232, Cys220–Cys227, Cys289–Cys320, Cys305–Cys315, Cys319–Cys359, Cys335–Cys350, Cys337–Cys347, and Cys342–Cys343. Ser224 carries the O-palmitoleoyl serine; by PORCN lipid modification. Asn292 and Asn306 each carry an N-linked (GlcNAc...) asparagine glycan.

It belongs to the Wnt family. Post-translationally, palmitoleoylation is required for efficient binding to frizzled receptors. Depalmitoleoylation leads to Wnt signaling pathway inhibition.

It localises to the secreted. Its subcellular location is the extracellular space. It is found in the extracellular matrix. Ligand for members of the frizzled family of seven transmembrane receptors. Probable developmental protein. May be a signaling molecule which affects the development of discrete regions of tissues. Is likely to signal over only few cell diameters. The polypeptide is Protein Wnt-5b (wnt5b) (Xenopus laevis (African clawed frog)).